Here is a 39-residue protein sequence, read N- to C-terminus: Photosystem II reaction center protein J (39 aa).

A helical membrane pass occupies residues L9 to Y29.

The protein belongs to the PsbJ family. In terms of assembly, PSII is composed of 1 copy each of membrane proteins PsbA, PsbB, PsbC, PsbD, PsbE, PsbF, PsbH, PsbI, PsbJ, PsbK, PsbL, PsbM, PsbT, PsbX, PsbY, PsbZ, Psb30/Ycf12, at least 3 peripheral proteins of the oxygen-evolving complex and a large number of cofactors. It forms dimeric complexes.

Its subcellular location is the plastid. It localises to the chloroplast thylakoid membrane. Functionally, one of the components of the core complex of photosystem II (PSII). PSII is a light-driven water:plastoquinone oxidoreductase that uses light energy to abstract electrons from H(2)O, generating O(2) and a proton gradient subsequently used for ATP formation. It consists of a core antenna complex that captures photons, and an electron transfer chain that converts photonic excitation into a charge separation. The chain is Photosystem II reaction center protein J from Porphyra purpurea (Red seaweed).